The following is a 297-amino-acid chain: MDAEGLALLLPPVTLAALVDSWLREDCPGLNYAALVSGAGPSQAALWAKSPGVLAGQPFFDAIFTQLNCQVSWFLPEGSKLVPVARVAEVRGPAHCLLLGERVALNTLARCSGIASAAAAAVEAARGAGWTGHVAGTRKTTPGFRLVEKYGLLVGGAASHRYDLGGLVMVKDNHVVAAGGVEKAVRAARQAADFTLKVEVECSSLQEAVQAAEAGADLVLLDNFKPEELHPTATVLKAQFPSVAVEASGGITLDNLPQFCGPHIDVISMGMLTQAAPALDFSLKLFAKEVAPVPKIH.

The tract at residues 8–12 (LLLPP) is important for hexamer formation. Quinolinate-binding positions include arginine 102, 138-139 (RK), 160-161 (HR), lysine 171, glutamate 201, aspartate 222, 248-250 (SGG), and glycine 270.

This sequence belongs to the NadC/ModD family. In terms of assembly, hexamer formed by 3 homodimers.

It carries out the reaction nicotinate beta-D-ribonucleotide + CO2 + diphosphate = quinolinate + 5-phospho-alpha-D-ribose 1-diphosphate + 2 H(+). Its pathway is cofactor biosynthesis; NAD(+) biosynthesis; nicotinate D-ribonucleotide from quinolinate: step 1/1. Its activity is regulated as follows. Activity toward QA is slightly repressed by phosphoribosylpyrophosphate (PRPP) in both a competitive and a non-competitive manner. Competitively inhibited by phthalic acid (PHT). In terms of biological role, involved in the catabolism of quinolinic acid (QA). This chain is Nicotinate-nucleotide pyrophosphorylase [carboxylating] (QPRT), found in Homo sapiens (Human).